Reading from the N-terminus, the 89-residue chain is Small ribosomal subunit protein uS15 (89 aa).

This sequence belongs to the universal ribosomal protein uS15 family. In terms of assembly, part of the 30S ribosomal subunit. Forms a bridge to the 50S subunit in the 70S ribosome, contacting the 23S rRNA.

Its function is as follows. One of the primary rRNA binding proteins, it binds directly to 16S rRNA where it helps nucleate assembly of the platform of the 30S subunit by binding and bridging several RNA helices of the 16S rRNA. In terms of biological role, forms an intersubunit bridge (bridge B4) with the 23S rRNA of the 50S subunit in the ribosome. The polypeptide is Small ribosomal subunit protein uS15 (Chromobacterium violaceum (strain ATCC 12472 / DSM 30191 / JCM 1249 / CCUG 213 / NBRC 12614 / NCIMB 9131 / NCTC 9757 / MK)).